The primary structure comprises 299 residues: Farnesyl diphosphate synthase (299 aa).

Isopentenyl diphosphate is bound by residues lysine 45, arginine 48, and histidine 77. 2 residues coordinate Mg(2+): aspartate 84 and aspartate 90. A (2E)-geranyl diphosphate-binding site is contributed by arginine 95. Arginine 96 contributes to the isopentenyl diphosphate binding site. (2E)-geranyl diphosphate is bound by residues lysine 181, threonine 182, glutamine 220, and lysine 237.

This sequence belongs to the FPP/GGPP synthase family. Mg(2+) is required as a cofactor.

The protein localises to the cytoplasm. It carries out the reaction isopentenyl diphosphate + (2E)-geranyl diphosphate = (2E,6E)-farnesyl diphosphate + diphosphate. The chain is Farnesyl diphosphate synthase (ispA) from Escherichia coli (strain K12).